Reading from the N-terminus, the 469-residue chain is Probable glucuronoxylan glucuronosyltransferase F8H (469 aa).

Residues 1–36 (MSLDIKKPNITKTKKKKTGFVVKMQLNNNRGGNKRN) lie on the Cytoplasmic side of the membrane. Residues 37 to 57 (IFIFFFFRNYYTWILWFCLSL) form a helical; Signal-anchor for type II membrane protein membrane-spanning segment. Residues 58-469 (YFFTSYFSVE…RVLSQREVDM (412 aa)) are Lumenal-facing. N-linked (GlcNAc...) asparagine glycosylation is found at asparagine 171, asparagine 203, asparagine 301, and asparagine 411.

Belongs to the glycosyltransferase 47 family. Expressed in xylem cells in stems and in roots.

It localises to the golgi apparatus membrane. Its function is as follows. Involved in the synthesis of the hemicellulose glucuronoxylan, a major component of secondary cell walls. Probably involved in the synthesis of the glycosyl sequence at the glucuronoxylan reducing end. This is Probable glucuronoxylan glucuronosyltransferase F8H (F8H) from Arabidopsis thaliana (Mouse-ear cress).